The sequence spans 498 residues: Glutathione hydrolase 6 (498 aa).

Residues 1–49 lie on the Cytoplasmic side of the membrane; the sequence is MDATTGAVLYQKLQLWEPGMESEEEEEEEEIAEPLVLSLRRLQNTPGNK. The helical; Signal-anchor for type II membrane protein transmembrane segment at 50–70 threads the bilayer; the sequence is VGGLPGAWTRLLAGLLLLAVS. Topologically, residues 71–498 are extracellular; that stretch reads SSLALRQLQG…PSGCCPFQGY (428 aa). 3 N-linked (GlcNAc...) asparagine glycosylation sites follow: Asn-162, Asn-167, and Asn-376.

Belongs to the gamma-glutamyltransferase family. Heterodimer composed of the light and heavy chains. The active site is located in the light chain. Post-translationally, cleaved by autocatalysis into a large and a small subunit and the autocatalytic cleavage is essential to the functional activation of the enzyme.

The protein resides in the membrane. The enzyme catalyses an N-terminal (5-L-glutamyl)-[peptide] + an alpha-amino acid = 5-L-glutamyl amino acid + an N-terminal L-alpha-aminoacyl-[peptide]. It carries out the reaction glutathione + H2O = L-cysteinylglycine + L-glutamate. The catalysed reaction is an S-substituted glutathione + H2O = an S-substituted L-cysteinylglycine + L-glutamate. Its pathway is sulfur metabolism; glutathione metabolism. Its function is as follows. Hydrolyzes and transfers gamma-glutamyl moieties from glutathione and other gamma-glutamyl compounds to acceptors. The protein is Glutathione hydrolase 6 of Rattus norvegicus (Rat).